The sequence spans 370 residues: MAELTIPADLKPRDGRFGSGPSKVRPEQLQALAAAGDLFGTSHRQAPVKNLVGRVRDGIKQLFSVPEGYDVILGNGGSTAFWDAAAFGLIDKRSLHLTYGEFSAKFASAVAKNPFVGDPIVVKADPGSAPEPQSDPSVDVIAWAHNETSTGVAVPVQRPADSGDALIVIDATSGAGGLPVDIAQADAYYFAPQKNFAGDGGLWLAVVSPAALARIEAIGQSGRWVPDFLSLPIAVENSLKNQTYNTPAIGTLVLLADQLDWLNGNGGLDWAVKRTADSSQRLYSWAEASSYATPFVTDPALRSQVVGTIDFADDVDAAAVAKVLRANGIVDTEPYRKLGRNQLRVAMFAAVDPEDVSALTRCVDWVVERL.

Residues 1–22 are disordered; sequence MAELTIPADLKPRDGRFGSGPS. L-glutamate is bound at residue R44. Pyridoxal 5'-phosphate is bound by residues F102, T148, D170, and Q193. The residue at position 194 (K194) is an N6-(pyridoxal phosphate)lysine. 245–246 contacts pyridoxal 5'-phosphate; that stretch reads NT.

This sequence belongs to the class-V pyridoxal-phosphate-dependent aminotransferase family. SerC subfamily. Homodimer. Requires pyridoxal 5'-phosphate as cofactor.

Its subcellular location is the cytoplasm. The enzyme catalyses O-phospho-L-serine + 2-oxoglutarate = 3-phosphooxypyruvate + L-glutamate. It catalyses the reaction 4-(phosphooxy)-L-threonine + 2-oxoglutarate = (R)-3-hydroxy-2-oxo-4-phosphooxybutanoate + L-glutamate. It participates in amino-acid biosynthesis; L-serine biosynthesis; L-serine from 3-phospho-D-glycerate: step 2/3. Its pathway is cofactor biosynthesis; pyridoxine 5'-phosphate biosynthesis; pyridoxine 5'-phosphate from D-erythrose 4-phosphate: step 3/5. Its function is as follows. Catalyzes the reversible conversion of 3-phosphohydroxypyruvate to phosphoserine and of 3-hydroxy-2-oxo-4-phosphonooxybutanoate to phosphohydroxythreonine. The chain is Putative phosphoserine aminotransferase from Mycobacterium sp. (strain JLS).